Here is a 47-residue protein sequence, read N- to C-terminus: Large ribosomal subunit protein bL33 (47 aa).

The protein belongs to the bacterial ribosomal protein bL33 family.

This Staphylococcus xylosus protein is Large ribosomal subunit protein bL33.